Reading from the N-terminus, the 454-residue chain is Protein odr-4 homolog (454 aa).

Helical transmembrane passes span 82–102 (MLPG…ELAN) and 432–452 (IGVI…FHYF).

This sequence belongs to the ODR-4 family. Ubiquitously expressed.

It is found in the membrane. Functionally, may play a role in the trafficking of a subset of G-protein coupled receptors. The sequence is that of Protein odr-4 homolog from Homo sapiens (Human).